The primary structure comprises 255 residues: Ribonuclease HII (255 aa).

An RNase H type-2 domain is found at 73-255 (LYIGGIDEAG…HRKSFLKNIL (183 aa)). A divalent metal cation contacts are provided by D79, E80, and D171.

It belongs to the RNase HII family. Mn(2+) is required as a cofactor. Requires Mg(2+) as cofactor.

It is found in the cytoplasm. The enzyme catalyses Endonucleolytic cleavage to 5'-phosphomonoester.. In terms of biological role, endonuclease that specifically degrades the RNA of RNA-DNA hybrids. The chain is Ribonuclease HII from Clostridioides difficile (strain 630) (Peptoclostridium difficile).